We begin with the raw amino-acid sequence, 394 residues long: Tyrosine--tRNA ligase, cytoplasmic (394 aa).

S2 is modified (N-acetylserine). Position 43 (Y43) interacts with L-tyrosine. The 'HIGH' region motif lies at 48–56 (PTGRPHCGY). 4 residues coordinate L-tyrosine: Y170, Q174, D177, and Q192. A 'KMSKS' region motif is present at residues 227 to 231 (KMSAS). Phosphoserine is present on S235. The disordered stretch occupies residues 348–394 (QEASEKGYPVATPQKSKKAKKPKNKGTKYPGATKTNEIATKLEETKL). T359 is modified (phosphothreonine). The Nuclear localization signal motif lies at 360-378 (PQKSKKAKKPKNKGTKYPG). The span at 362–373 (KSKKAKKPKNKG) shows a compositional bias: basic residues.

The protein belongs to the class-I aminoacyl-tRNA synthetase family. As to quaternary structure, homodimer. Interacts with KNR4/SMI1.

It localises to the cytoplasm. Its subcellular location is the nucleus. It catalyses the reaction tRNA(Tyr) + L-tyrosine + ATP = L-tyrosyl-tRNA(Tyr) + AMP + diphosphate + H(+). Inhibited by N-ethylmaleimide and p-chloromercuribenzoate. In terms of biological role, catalyzes the attachment of L-tyrosine to tRNA(Tyr) in a two-step reaction: L-tyrosine is first activated by ATP to form Tyr-AMP and then transferred to the acceptor end of tRNA(Tyr). The specificity determinants on tRNA(Tyr) are the base pair C1-G72, the discriminator residue A73, and the three anticodon bases G34, U35 and A36. Also involved in nuclear tRNA export. Also attaches D-Tyr to tRNA(Tyr), this reaction is about 150-fold less efficient than attachment of L-Tyr. The chain is Tyrosine--tRNA ligase, cytoplasmic from Saccharomyces cerevisiae (strain ATCC 204508 / S288c) (Baker's yeast).